Here is a 195-residue protein sequence, read N- to C-terminus: Translation initiation factor IF-3 (195 aa).

The tract at residues 158–195 is disordered; that stretch reads EQSEVQQRPKREGRNMIMFLSPRKTPLIKKEEDAKENN. The span at 185-195 shows a compositional bias: basic and acidic residues; the sequence is IKKEEDAKENN.

It belongs to the IF-3 family. In terms of assembly, monomer.

Its subcellular location is the cytoplasm. In terms of biological role, IF-3 binds to the 30S ribosomal subunit and shifts the equilibrium between 70S ribosomes and their 50S and 30S subunits in favor of the free subunits, thus enhancing the availability of 30S subunits on which protein synthesis initiation begins. This is Translation initiation factor IF-3 from Prochlorococcus marinus (strain MIT 9515).